We begin with the raw amino-acid sequence, 254 residues long: Putative electron transfer flavoprotein subunit YdiQ (254 aa).

Belongs to the ETF beta-subunit/FixA family. In terms of assembly, ydiR and YdiQ form a heterodimer.

Functionally, may play a role in a redox process. The polypeptide is Putative electron transfer flavoprotein subunit YdiQ (ydiQ) (Escherichia coli (strain K12)).